A 116-amino-acid polypeptide reads, in one-letter code: Iron-sulfur cluster insertion protein ErpA (116 aa).

Iron-sulfur cluster is bound by residues C44, C108, and C110.

It belongs to the HesB/IscA family. In terms of assembly, homodimer. Requires iron-sulfur cluster as cofactor.

In terms of biological role, required for insertion of 4Fe-4S clusters for at least IspG. The sequence is that of Iron-sulfur cluster insertion protein ErpA from Idiomarina loihiensis (strain ATCC BAA-735 / DSM 15497 / L2-TR).